Reading from the N-terminus, the 375-residue chain is MSRTLELAKDLIARKSVTPDDAGCQELLISRLEPLGFSIERLRFGDVDNFYARRGNTGPLLVFAGHTDVVPTGPVAQWHTPPFTPTVKDGMLYGRGAADMKTSLAAFITAIEAFVADHPDHPGSIGLIITSDEEGVAINGTVKVVETLKARNELIDYCIVGEPTSSKVVGDMIKNGRRGSLSGKLTVKGIQGHIAYPHLVKNPIHMAAPAIKELSETIWDEGNEYFPPTSWQISNIHGGTGATNVVPGEVEILFNFRFSTASTAENLKQRVHAILDRHQLEYDLAWELSGKPFLTPRGSLVTAISSAIDQAFGVTPALSTSGGTSDGRFIADIAGQIVEFGPLNATIHKLNECVAVADIEPLRRTYQLTLEALLK.

His-66 contributes to the Zn(2+) binding site. Residue Asp-68 is part of the active site. Zn(2+) is bound at residue Asp-99. The active-site Proton acceptor is Glu-133. 3 residues coordinate Zn(2+): Glu-134, Glu-162, and His-348.

This sequence belongs to the peptidase M20A family. DapE subfamily. Homodimer. It depends on Zn(2+) as a cofactor. The cofactor is Co(2+).

It catalyses the reaction N-succinyl-(2S,6S)-2,6-diaminopimelate + H2O = (2S,6S)-2,6-diaminopimelate + succinate. It participates in amino-acid biosynthesis; L-lysine biosynthesis via DAP pathway; LL-2,6-diaminopimelate from (S)-tetrahydrodipicolinate (succinylase route): step 3/3. In terms of biological role, catalyzes the hydrolysis of N-succinyl-L,L-diaminopimelic acid (SDAP), forming succinate and LL-2,6-diaminopimelate (DAP), an intermediate involved in the bacterial biosynthesis of lysine and meso-diaminopimelic acid, an essential component of bacterial cell walls. The polypeptide is Succinyl-diaminopimelate desuccinylase (Methylobacillus flagellatus (strain ATCC 51484 / DSM 6875 / VKM B-1610 / KT)).